Consider the following 360-residue polypeptide: UDP-3-O-acylglucosamine N-acyltransferase (360 aa).

Histidine 248 serves as the catalytic Proton acceptor.

It belongs to the transferase hexapeptide repeat family. LpxD subfamily. Homotrimer.

The catalysed reaction is a UDP-3-O-[(3R)-3-hydroxyacyl]-alpha-D-glucosamine + a (3R)-hydroxyacyl-[ACP] = a UDP-2-N,3-O-bis[(3R)-3-hydroxyacyl]-alpha-D-glucosamine + holo-[ACP] + H(+). It participates in bacterial outer membrane biogenesis; LPS lipid A biosynthesis. Catalyzes the N-acylation of UDP-3-O-acylglucosamine using 3-hydroxyacyl-ACP as the acyl donor. Is involved in the biosynthesis of lipid A, a phosphorylated glycolipid that anchors the lipopolysaccharide to the outer membrane of the cell. This Chlamydia pneumoniae (Chlamydophila pneumoniae) protein is UDP-3-O-acylglucosamine N-acyltransferase.